The primary structure comprises 1328 residues: Tubulin polyglutamylase TTLL5 (1328 aa).

Residues 1–22 form a disordered region; it reads MPVVMARDLEETASSSEDEDLA. A TTL domain is found at 62-407; sequence RYHLSYKIVR…VCQDPAQRTS (346 aa). ATP-binding positions include lysine 180, 186 to 187, 208 to 211, and 221 to 223; these read RG, SRYI, and KFD. Residue arginine 186 coordinates a protein. Arginine 247 contacts L-glutamate. Position 268–269 (268–269) interacts with ATP; it reads TN. 3 residues coordinate L-glutamate: tyrosine 270, serine 271, and lysine 293. Positions 353, 366, and 368 each coordinate Mg(2+). The interval 378–488 is c-MTBD region; the sequence is PLDLKIKASM…RGGFIRIFPT (111 aa). Lysine 384 is an L-glutamate binding site. Disordered regions lie at residues 411–436, 585–631, 834–853, 948–975, 1006–1032, 1085–1129, and 1212–1271; these read IYPSFESSRRNPFQKPQRTRPLSASD, AQPA…QAKY, HSKSSKNSSSYSDSGAKGDH, PALLLSPVPDNAPPSIHSGTQNVSPAGL, SSAKAAGSCHPHKHHSGIAKTQKEGED, RSSA…LQTG, and RISS…QLNG. Over residues 420–432 the composition is skewed to polar residues; sequence RNPFQKPQRTRPL. A compositionally biased stretch (acidic residues) spans 597 to 617; the sequence is ESEEEEEVGLDNDDEEQEASQ. A compositionally biased stretch (low complexity) spans 838-847; sequence SKNSSSYSDS. Polar residues-rich tracts occupy residues 1116 to 1128, 1214 to 1227, 1234 to 1248, and 1257 to 1271; these read THSSPPGSRSLQT, SSATTGGQKPNTLP, PNSSTLVSKPASNHK, and QRASKGSSAEGQLNG.

Belongs to the tubulin--tyrosine ligase family. As to quaternary structure, interacts with the transcriptional coactivators NCOA1/SRC-1 and NCOA2/TIF2. Mg(2+) serves as cofactor. In terms of tissue distribution, highly expressed in brain, kidney, liver, spleen and testis. Expressed in heart, lung, muscle and trachea.

The protein resides in the cell projection. The protein localises to the cilium. Its subcellular location is the cytoplasm. It is found in the cytoskeleton. It localises to the cilium basal body. The protein resides in the nucleus. The enzyme catalyses L-glutamyl-[protein] + L-glutamate + ATP = gamma-L-glutamyl-L-glutamyl-[protein] + ADP + phosphate + H(+). It catalyses the reaction (L-glutamyl)(n)-gamma-L-glutamyl-L-glutamyl-[protein] + L-glutamate + ATP = (L-glutamyl)(n+1)-gamma-L-glutamyl-L-glutamyl-[protein] + ADP + phosphate + H(+). Functionally, polyglutamylase which modifies tubulin, generating polyglutamate side chains on the gamma-carboxyl group of specific glutamate residues within the C-terminal tail of tubulin. Preferentially mediates ATP-dependent initiation step of the polyglutamylation reaction over the elongation step. Preferentially modifies the alpha-tubulin tail over a beta-tail. Required for CCSAP localization to both polyglutamylated spindle and cilia microtubules. Increases the effects of transcriptional coactivator NCOA2/TIF2 in glucocorticoid receptor-mediated repression and induction and in androgen receptor-mediated induction. This is Tubulin polyglutamylase TTLL5 from Mus musculus (Mouse).